Reading from the N-terminus, the 823-residue chain is Leucine--tRNA ligase (823 aa).

A 'HIGH' region motif is present at residues Pro-42–His-52. The 'KMSKS' region motif lies at Lys-575–Ser-579. ATP is bound at residue Lys-578.

This sequence belongs to the class-I aminoacyl-tRNA synthetase family.

It localises to the cytoplasm. It catalyses the reaction tRNA(Leu) + L-leucine + ATP = L-leucyl-tRNA(Leu) + AMP + diphosphate. The chain is Leucine--tRNA ligase from Legionella pneumophila (strain Corby).